The primary structure comprises 210 residues: MMKANFIVVEGLEGAGKSTAIKTVLDTLKQAGIENIVNTREPGGTPLAEKMRALVKEEHEGEELKDMTELLLLYAARVQLVENVIKPALANGQWVVGDRHDLSSQAYQGGGRQIDASLMKNLRDTTLGDFKPAFTLYMDIDPRIGLERARGRGELDRIEKMDISFFERTRERYLEIANADPSIVVINAEQSIEEVSRDIQDALNEWLSRQ.

11–18 (GLEGAGKS) is an ATP binding site.

The protein belongs to the thymidylate kinase family.

The catalysed reaction is dTMP + ATP = dTDP + ADP. Phosphorylation of dTMP to form dTDP in both de novo and salvage pathways of dTTP synthesis. This is Thymidylate kinase from Vibrio parahaemolyticus serotype O3:K6 (strain RIMD 2210633).